Reading from the N-terminus, the 171-residue chain is NADH-ubiquinone oxidoreductase chain 6 (171 aa).

5 helical membrane passes run 1-21 (MYVMFLLSILLVLGFVSISSK), 25-44 (IYGGVGLIVSGAVGCGIIMG), 49-71 (FMGLMVFLIYLGGMLVVFGYTTA), 85-105 (VVIWGVVLLGVGMELFMVAWM), and 150-170 (WFAAIAGWSLFISVLIVIEII).

This sequence belongs to the complex I subunit 6 family. Core subunit of respiratory chain NADH dehydrogenase (Complex I) which is composed of 45 different subunits.

It is found in the mitochondrion inner membrane. It carries out the reaction a ubiquinone + NADH + 5 H(+)(in) = a ubiquinol + NAD(+) + 4 H(+)(out). Core subunit of the mitochondrial membrane respiratory chain NADH dehydrogenase (Complex I) which catalyzes electron transfer from NADH through the respiratory chain, using ubiquinone as an electron acceptor. Essential for the catalytic activity and assembly of complex I. The protein is NADH-ubiquinone oxidoreductase chain 6 (MT-ND6) of Lemur catta (Ring-tailed lemur).